A 475-amino-acid chain; its full sequence is UDP-N-acetylmuramate--L-alanine ligase (475 aa).

121-127 (GTHGKTT) is an ATP binding site.

It belongs to the MurCDEF family.

Its subcellular location is the cytoplasm. The enzyme catalyses UDP-N-acetyl-alpha-D-muramate + L-alanine + ATP = UDP-N-acetyl-alpha-D-muramoyl-L-alanine + ADP + phosphate + H(+). It participates in cell wall biogenesis; peptidoglycan biosynthesis. In terms of biological role, cell wall formation. This chain is UDP-N-acetylmuramate--L-alanine ligase, found in Salinibacter ruber (strain DSM 13855 / M31).